A 619-amino-acid chain; its full sequence is MKFLGIAALVAGLLAPSLVLGAPAPGTEGVNLLTPVDKRQDSQAERYGGGGGGGCNSPTNRQCWSPGFNINTDYELGTPNTGKTRRYKLTLTETDNWIGPDGVIKDKVMMVNDKIIGPTIQADWGDYIEITVINKLKSNGTSIHWHGMHQRNSNIQDGVNGVTECPIPPRGGSKVYRWRATQYGTSWYHSHFSAQYGNGIVGPIVINGPASANYDVDLGPFPLTDYYYDTADRLVLLTQHAGPPPSNNVLFNGFAKHPTTGAGQYATVSLTKGKKHRLRLINTSVENHFQLSLVNHSMTIISADLVPVQPYKVDSLFLGVGQRYDVIIDANQAVGNYWFNVTFGGSKLCGDSDNHYPAAIFRYQGAPKALPTNQGVAPVDHQCLDLNDLKPVLQRSLNTNSIALNTGNTIPITLDGFVWRVNGTAININWNKPVLEYVLTGNTNYSQSDNIVQVEGVNQWKYWLIENDPDGAFSLPHPIHLHGHDFLILGRSPDVTAISQTRYVFDPAVDMARLNGNNPTRRDTAMLPAKGWLLIAFRTDNPGSWLMHCHIAWHVSGGLSNQFLERAQDLRNSISPADKKAFNDNCDAWRAYFPDNAPFPKDDSGLRSGVKAREVKMKW.

Positions 1–21 (MKFLGIAALVAGLLAPSLVLG) are cleaved as a signal peptide. The propeptide occupies 22–49 (APAPGTEGVNLLTPVDKRQDSQAERYGG). A disulfide bond links Cys-55 and Cys-63. 2 Plastocyanin-like domains span residues 84–207 (TRRY…IVIN) and 216–373 (VDLG…LPTN). Asn-139 carries an N-linked (GlcNAc...) asparagine glycan. Cu cation-binding residues include His-144, His-146, His-189, and His-191. Intrachain disulfides connect Cys-165/Cys-586 and Cys-349/Cys-383. N-linked (GlcNAc...) asparagine glycosylation is found at Asn-282, Asn-295, and Asn-340. N-linked (GlcNAc...) asparagine glycosylation is found at Asn-422 and Asn-444. The Plastocyanin-like 3 domain occupies 431–566 (NKPVLEYVLT…GGLSNQFLER (136 aa)). Cu cation contacts are provided by His-477, His-480, His-482, His-548, Cys-549, His-550, and His-554. Residues 607 to 619 (RSGVKAREVKMKW) constitute a propeptide that is removed on maturation.

It belongs to the multicopper oxidase family. Cu cation is required as a cofactor.

The protein resides in the secreted. The catalysed reaction is 4 hydroquinone + O2 = 4 benzosemiquinone + 2 H2O. Lignin degradation and detoxification of lignin-derived products. The sequence is that of Laccase (lacc) from Neurospora crassa (strain ATCC 24698 / 74-OR23-1A / CBS 708.71 / DSM 1257 / FGSC 987).